A 1870-amino-acid chain; its full sequence is RNA1 polyprotein (1870 aa).

The region spanning 486–654 (LEKLIELHNS…VPYNADDPCA (169 aa)) is the SF3 helicase domain. 515–522 (GASGTGKT) is an ATP binding site. Residues 910–930 (SLWCMSGDASFVAGAATVFSV) traverse the membrane as a helical segment. Serine 937 bears the O-(5'-phospho-RNA)-serine mark. One can recognise a Peptidase C3 domain in the interval 963-1165 (SSCFGDSALW…ASFMPYHASL (203 aa)). Catalysis depends on for picornain 3C-like protease activity residues histidine 1003, glutamate 1039, and cysteine 1128. The region spanning 1445 to 1572 (NNILCCDYSR…SVSDAISSRF (128 aa)) is the RdRp catalytic domain.

In terms of processing, specific enzymatic cleavages by picornain 3C-like protease in vivo yield mature proteins. Picornain 3C-like protease is autocatalytically processed. Post-translationally, uridylylated by the polymerase and is covalently linked to the 5'-end of genomic RNA. This uridylylated form acts as a nucleotide-peptide primer for the polymerase.

It is found in the host membrane. Its subcellular location is the host cytoplasm. The protein resides in the host perinuclear region. The protein localises to the host endoplasmic reticulum. The catalysed reaction is RNA(n) + a ribonucleoside 5'-triphosphate = RNA(n+1) + diphosphate. In terms of biological role, thiol protease that cleaves the RNA1 and RNA2 polyproteins. Functionally, plays a role in RNA replication. It is covalently linked to the 5'terminus of both viral single-stranded RNA1 and RNA2 molecules. Down-regulates the RNA1 polyprotein processing and enhances trans-cleavage of RNA2 polyproteins. The protease cofactor and the putative helicase seem to target the replication complexes to ER membranes. Their physical association causes the membrane rearrangement of host ER that may result in formation of the small membranous vesicles that are the site of viral RNA synthesis. Its function is as follows. The protease cofactor and the putative helicase seem to target the replication complexes to ER membranes. Their physical association causes the membrane rearrangement of host ER that may result in formation of the small membranous vesicles that are the site of viral RNA synthesis. In terms of biological role, replicates the viral genome. The sequence is that of RNA1 polyprotein from Broad bean wilt virus 2 (BBWV-2).